The following is a 184-amino-acid chain: Large ribosomal subunit protein uL15 (184 aa).

Positions 1–45 (MNLSSLRPAKGSVRNKKRVGRGQGSGNGTTAGKGNKGQQARSGYK) are disordered. The span at 21–35 (RGQGSGNGTTAGKGN) shows a compositional bias: gly residues.

The protein belongs to the universal ribosomal protein uL15 family. As to quaternary structure, part of the 50S ribosomal subunit.

Its function is as follows. Binds to the 23S rRNA. The chain is Large ribosomal subunit protein uL15 from Chlorobium chlorochromatii (strain CaD3).